The following is a 1034-amino-acid chain: Isoleucine--tRNA ligase (1034 aa).

Residues proline 46–threonine 56 carry the 'HIGH' region motif. A 'KMSKS' region motif is present at residues lysine 598 to serine 602. An ATP-binding site is contributed by lysine 601.

Belongs to the class-I aminoacyl-tRNA synthetase family. IleS type 2 subfamily. As to quaternary structure, monomer. The cofactor is Zn(2+).

It is found in the cytoplasm. It carries out the reaction tRNA(Ile) + L-isoleucine + ATP = L-isoleucyl-tRNA(Ile) + AMP + diphosphate. In terms of biological role, catalyzes the attachment of isoleucine to tRNA(Ile). As IleRS can inadvertently accommodate and process structurally similar amino acids such as valine, to avoid such errors it has two additional distinct tRNA(Ile)-dependent editing activities. One activity is designated as 'pretransfer' editing and involves the hydrolysis of activated Val-AMP. The other activity is designated 'posttransfer' editing and involves deacylation of mischarged Val-tRNA(Ile). In Methanococcus maripaludis (strain DSM 14266 / JCM 13030 / NBRC 101832 / S2 / LL), this protein is Isoleucine--tRNA ligase.